The following is a 133-amino-acid chain: Transcription antitermination protein NusB (133 aa).

The protein belongs to the NusB family.

Functionally, involved in transcription antitermination. Required for transcription of ribosomal RNA (rRNA) genes. Binds specifically to the boxA antiterminator sequence of the ribosomal RNA (rrn) operons. The protein is Transcription antitermination protein NusB of Shewanella denitrificans (strain OS217 / ATCC BAA-1090 / DSM 15013).